Reading from the N-terminus, the 302-residue chain is 4-hydroxy-tetrahydrodipicolinate synthase (302 aa).

Pyruvate is bound at residue threonine 55. The active-site Proton donor/acceptor is tyrosine 144. The active-site Schiff-base intermediate with substrate is the lysine 172. Valine 214 provides a ligand contact to pyruvate.

This sequence belongs to the DapA family. In terms of assembly, homotetramer; dimer of dimers.

Its subcellular location is the cytoplasm. The enzyme catalyses L-aspartate 4-semialdehyde + pyruvate = (2S,4S)-4-hydroxy-2,3,4,5-tetrahydrodipicolinate + H2O + H(+). It participates in amino-acid biosynthesis; L-lysine biosynthesis via DAP pathway; (S)-tetrahydrodipicolinate from L-aspartate: step 3/4. Functionally, catalyzes the condensation of (S)-aspartate-beta-semialdehyde [(S)-ASA] and pyruvate to 4-hydroxy-tetrahydrodipicolinate (HTPA). The sequence is that of 4-hydroxy-tetrahydrodipicolinate synthase from Synechococcus sp. (strain CC9605).